A 437-amino-acid polypeptide reads, in one-letter code: Transcription factor AP-2-alpha (437 aa).

Residue Lys10 forms a Glycyl lysine isopeptide (Lys-Gly) (interchain with G-Cter in SUMO); alternate linkage. A Glycyl lysine isopeptide (Lys-Gly) (interchain with G-Cter in SUMO2); alternate cross-link involves residue Lys10. The tract at residues 14–107 (CEDRHDGASN…GQRQSQESGL (94 aa)) is disordered. A PPxY motif motif is present at residues 57 to 62 (YFPPPY). Low complexity-rich tracts occupy residues 65 to 74 (IYPQSQDPYS) and 88 to 101 (QPQPQHPGWPGQRQ). Glycyl lysine isopeptide (Lys-Gly) (interchain with G-Cter in SUMO2) cross-links involve residues Lys177 and Lys184. A Phosphoserine; by PKA modification is found at Ser239. The H-S-H (helix-span-helix), dimerization stretch occupies residues 280 to 410 (RRKAANVTLL…YLTEALKAMD (131 aa)). Residues 414–427 (LSNNPNSHTDNNAK) are compositionally biased toward polar residues. The interval 414–437 (LSNNPNSHTDNNAKSSDKEEKHRK) is disordered. The span at 428-437 (SSDKEEKHRK) shows a compositional bias: basic and acidic residues.

Belongs to the AP-2 family. Binds DNA as a dimer. Can form homodimers or heterodimers with other AP-2 family members. Interacts with WWOX. Interacts with CITED4. Interacts with UBE2I. Interacts with RALBP1 in a complex also containing EPN1 and NUMB during interphase and mitosis. Interacts with KCTD1; this interaction represses transcription activation. Interacts (via C-terminus) with CITED2 (via C-terminus); the interaction stimulates TFAP2A-transcriptional activation. Interacts (via N-terminus) with EP300 (via N-terminus); the interaction requires CITED2. Interacts with KCTD15; this interaction inhibits TFAP2A transcriptional activation. Sumoylated on Lys-10; which inhibits transcriptional activity.

It is found in the nucleus. Sequence-specific DNA-binding protein that interacts with inducible viral and cellular enhancer elements to regulate transcription of selected genes. AP-2 factors bind to the consensus sequence 5'-GCCNNNGGC-3' and activate genes involved in a large spectrum of important biological functions including proper eye, face, body wall, limb and neural tube development. They also suppress a number of genes including MCAM/MUC18, C/EBP alpha and MYC. AP-2-alpha is the only AP-2 protein required for early morphogenesis of the lens vesicle. Together with the CITED2 coactivator, stimulates the PITX2 P1 promoter transcription activation. Associates with chromatin to the PITX2 P1 promoter region. The protein is Transcription factor AP-2-alpha (TFAP2A) of Bos taurus (Bovine).